The primary structure comprises 314 residues: Methionyl-tRNA formyltransferase (314 aa).

Residue 112-115 (SLLP) coordinates (6S)-5,6,7,8-tetrahydrofolate.

Belongs to the Fmt family.

It catalyses the reaction L-methionyl-tRNA(fMet) + (6R)-10-formyltetrahydrofolate = N-formyl-L-methionyl-tRNA(fMet) + (6S)-5,6,7,8-tetrahydrofolate + H(+). Functionally, attaches a formyl group to the free amino group of methionyl-tRNA(fMet). The formyl group appears to play a dual role in the initiator identity of N-formylmethionyl-tRNA by promoting its recognition by IF2 and preventing the misappropriation of this tRNA by the elongation apparatus. This is Methionyl-tRNA formyltransferase from Aeromonas hydrophila subsp. hydrophila (strain ATCC 7966 / DSM 30187 / BCRC 13018 / CCUG 14551 / JCM 1027 / KCTC 2358 / NCIMB 9240 / NCTC 8049).